The following is a 201-amino-acid chain: Ribonuclease HII (201 aa).

Positions 12-201 constitute an RNase H type-2 domain; that stretch reads DLVAGVDEVG…VRELLDVSVQ (190 aa). Asp-18, Glu-19, and Asp-110 together coordinate a divalent metal cation.

It belongs to the RNase HII family. The cofactor is Mn(2+). Mg(2+) serves as cofactor.

It localises to the cytoplasm. It catalyses the reaction Endonucleolytic cleavage to 5'-phosphomonoester.. Endonuclease that specifically degrades the RNA of RNA-DNA hybrids. This chain is Ribonuclease HII, found in Pseudomonas aeruginosa (strain ATCC 15692 / DSM 22644 / CIP 104116 / JCM 14847 / LMG 12228 / 1C / PRS 101 / PAO1).